The following is a 470-amino-acid chain: tRNA-2-methylthio-N(6)-dimethylallyladenosine synthase (470 aa).

An MTTase N-terminal domain is found at 20–138 (PRVHIETFGC…LPELVERARS (119 aa)). Residues Cys-29, Cys-65, Cys-99, Cys-176, Cys-180, and Cys-183 each contribute to the [4Fe-4S] cluster site. The Radical SAM core domain maps to 162–398 (REGDLKAWVT…MEVQNRIARA (237 aa)). In terms of domain architecture, TRAM spans 401 to 464 (EARVGKVYDI…TWTLEGELVE (64 aa)).

The protein belongs to the methylthiotransferase family. MiaB subfamily. Monomer. It depends on [4Fe-4S] cluster as a cofactor.

The protein resides in the cytoplasm. It catalyses the reaction N(6)-dimethylallyladenosine(37) in tRNA + (sulfur carrier)-SH + AH2 + 2 S-adenosyl-L-methionine = 2-methylsulfanyl-N(6)-dimethylallyladenosine(37) in tRNA + (sulfur carrier)-H + 5'-deoxyadenosine + L-methionine + A + S-adenosyl-L-homocysteine + 2 H(+). Catalyzes the methylthiolation of N6-(dimethylallyl)adenosine (i(6)A), leading to the formation of 2-methylthio-N6-(dimethylallyl)adenosine (ms(2)i(6)A) at position 37 in tRNAs that read codons beginning with uridine. The protein is tRNA-2-methylthio-N(6)-dimethylallyladenosine synthase of Symbiobacterium thermophilum (strain DSM 24528 / JCM 14929 / IAM 14863 / T).